Consider the following 118-residue polypeptide: Large ribosomal subunit protein uL22 (118 aa).

This sequence belongs to the universal ribosomal protein uL22 family. As to quaternary structure, part of the 50S ribosomal subunit.

Its function is as follows. This protein binds specifically to 23S rRNA; its binding is stimulated by other ribosomal proteins, e.g. L4, L17, and L20. It is important during the early stages of 50S assembly. It makes multiple contacts with different domains of the 23S rRNA in the assembled 50S subunit and ribosome. The globular domain of the protein is located near the polypeptide exit tunnel on the outside of the subunit, while an extended beta-hairpin is found that lines the wall of the exit tunnel in the center of the 70S ribosome. The sequence is that of Large ribosomal subunit protein uL22 from Synechococcus sp. (strain RCC307).